The sequence spans 327 residues: Serine/threonine-protein phosphatase 4 regulatory subunit ppfr-4 (327 aa).

Residues 141–185 (KLAVEEIRRLKLERHKKKQELKMAELRIQKQLEAVSIDEQNLREL) are a coiled coil. Residues 271 to 327 (KFGHNPQNAPQSSAPAGAEAQESEEEVDDDEARAKAMRWDEYKDDHRRGWGNMHNKG) form a disordered region. Residues 275–284 (NPQNAPQSSA) show a composition bias toward polar residues. Acidic residues predominate over residues 291–301 (QESEEEVDDDE). The span at 302 to 318 (ARAKAMRWDEYKDDHRR) shows a compositional bias: basic and acidic residues.

In terms of assembly, serine/threonine-protein phosphatase 4 (PP4) occurs in different assemblies of the catalytic and one or more regulatory subunits. The catalytic subunit is likely to be pph-4.1.

Probable regulatory subunit of serine/threonine-protein phosphatase PP4 which may play a role in meiosis and embryonic mitosis. Probably in association with catalytic subunit pph-4.1, regulates microtubule severing during oocyte meiosis II by dephosphorylating and likely activating mei-1, a component of the katanin microtubule severing complex. The chain is Serine/threonine-protein phosphatase 4 regulatory subunit ppfr-4 from Caenorhabditis elegans.